An 824-amino-acid polypeptide reads, in one-letter code: Lysine-specific histone demethylase 1B homolog (824 aa).

The tract at residues 1 to 31 is disordered; the sequence is MTTELEIDDRKEEEAQIPGETSESEEGDEPV. An SWIRM domain is found at 245-346; sequence PFTDVIANIV…YGAFDFRIDP (102 aa). FAD is bound by residues 352–407, Val579, Glu788, and 796–798; these read PKIA…AQII and QTM.

This sequence belongs to the flavin monoamine oxidase family. FAD is required as a cofactor. As to expression, in hermaphrodites, expressed in gut cells, embryonic cells and sheath cells. Not expressed in sperm or pharyngeal neurons.

The protein localises to the nucleus. It catalyses the reaction N(6),N(6)-dimethyl-L-lysyl(4)-[histone H3] + 2 A + 2 H2O = L-lysyl(4)-[histone H3] + 2 formaldehyde + 2 AH2. Its function is as follows. Histone demethylase that demethylates di-methylated 'Lys-4' of histone H3, a specific tag for epigenetic transcriptional activation, thereby acting as a corepressor. Acts by oxidizing the substrate by FAD to generate the corresponding imine that is subsequently hydrolyzed. Plays a role in the mitotic development of the germline. May be involved in H3 demethylation in mitotic cells including gut and embryonic cells. Plays a role in sensitivity upon interstrand cross-link DNA damage, probably by positively regulating the expression of mlh-1. Plays a role in developmental growth and lifespan regulation in response to ultraviolet-induced damage. No obvious role in larval development, sex chromosome segregation or for regulating meiotic crossover frequency. This chain is Lysine-specific histone demethylase 1B homolog, found in Caenorhabditis elegans.